The sequence spans 937 residues: Periplasmic nitrate reductase (937 aa).

The tat-type signal signal peptide spans 1–31; the sequence is MSMNRREFLKTTAAAAAASAVGISIPSEAKA. Residues 40 to 96 form the 4Fe-4S Mo/W bis-MGD-type domain; the sequence is WQWDKAVCRFCGTGCGIMVAVKDDKIVAVKGDPESPVNRGINCIKGYFNAKIMYGAD. [4Fe-4S] cluster is bound by residues Cys47, Cys50, Cys54, and Cys82. Residues Lys84, Gln152, Asn177, Cys181, 214–221, Met422, Gln426, Asn532, Lys580, Asp607, and 827–836 contribute to the Mo-bis(molybdopterin guanine dinucleotide) site; these read WGANMAEM and TGRVLEHWHS. Trp903 serves as a coordination point for substrate. Asn911 and Lys928 together coordinate Mo-bis(molybdopterin guanine dinucleotide).

Belongs to the prokaryotic molybdopterin-containing oxidoreductase family. NasA/NapA/NarB subfamily. Component of the periplasmic nitrate reductase NapAB complex composed of NapA and NapB. [4Fe-4S] cluster serves as cofactor. Requires Mo-bis(molybdopterin guanine dinucleotide) as cofactor. In terms of processing, predicted to be exported by the Tat system. The position of the signal peptide cleavage has not been experimentally proven.

The protein resides in the periplasm. It catalyses the reaction 2 Fe(II)-[cytochrome] + nitrate + 2 H(+) = 2 Fe(III)-[cytochrome] + nitrite + H2O. Its function is as follows. Catalytic subunit of the periplasmic nitrate reductase complex NapAB. Receives electrons from NapB and catalyzes the reduction of nitrate to nitrite. In Nautilia profundicola (strain ATCC BAA-1463 / DSM 18972 / AmH), this protein is Periplasmic nitrate reductase.